A 211-amino-acid chain; its full sequence is MKIEVKTLAAKDAGAIDLDDAVFGIEEVRSDLLQRVVKWQLAARQQGTHKTLGRSEINRTKKRFGRQKGGGTARHGARSAPQFVGGGKAHGPRVRSHAHELPKKVRALGLRHALSAKLGAKSLVIIDDAALDAPQTKALRTSFEGLGISNALVISGAEVNENFAKAARNLPCIDVLPAQGLNVYDVLRRDTLVLTKAAVEQIHARLSAKEA.

Positions 63–94 are disordered; it reads RFGRQKGGGTARHGARSAPQFVGGGKAHGPRV.

This sequence belongs to the universal ribosomal protein uL4 family. As to quaternary structure, part of the 50S ribosomal subunit.

Functionally, one of the primary rRNA binding proteins, this protein initially binds near the 5'-end of the 23S rRNA. It is important during the early stages of 50S assembly. It makes multiple contacts with different domains of the 23S rRNA in the assembled 50S subunit and ribosome. Forms part of the polypeptide exit tunnel. The polypeptide is Large ribosomal subunit protein uL4 (Maricaulis maris (strain MCS10) (Caulobacter maris)).